The following is a 509-amino-acid chain: Photosystem II CP47 reaction center protein (509 aa).

The next 6 helical transmembrane spans lie at 21 to 36, 101 to 115, 140 to 156, 203 to 218, 237 to 252, and 457 to 472; these read AVHL…WAGS, IILS…IWHW, GIHL…FGAF, IAAG…FHLT, VLSS…AFVT, and NFAL…HGGR.

This sequence belongs to the PsbB/PsbC family. PsbB subfamily. In terms of assembly, PSII is composed of 1 copy each of membrane proteins PsbA, PsbB, PsbC, PsbD, PsbE, PsbF, PsbH, PsbI, PsbJ, PsbK, PsbL, PsbM, PsbT, PsbX, PsbY, PsbZ, Psb30/Ycf12, at least 3 peripheral proteins of the oxygen-evolving complex and a large number of cofactors. It forms dimeric complexes. Requires Binds multiple chlorophylls. PSII binds additional chlorophylls, carotenoids and specific lipids. as cofactor.

The protein resides in the plastid. It localises to the chloroplast thylakoid membrane. One of the components of the core complex of photosystem II (PSII). It binds chlorophyll and helps catalyze the primary light-induced photochemical processes of PSII. PSII is a light-driven water:plastoquinone oxidoreductase, using light energy to abstract electrons from H(2)O, generating O(2) and a proton gradient subsequently used for ATP formation. The protein is Photosystem II CP47 reaction center protein of Trieres chinensis (Marine centric diatom).